The primary structure comprises 214 residues: uncharacterized protein (214 aa).

This is an uncharacterized protein from Rhodobacter capsulatus (Rhodopseudomonas capsulata).